A 206-amino-acid polypeptide reads, in one-letter code: Holliday junction branch migration complex subunit RuvA (206 aa).

Residues 1 to 68 (MITFVRGMLA…EDAMQLFGFL (68 aa)) are domain I. The tract at residues 69 to 147 (EPGERELFGQ…KWREESGLSA (79 aa)) is domain II. The flexible linker stretch occupies residues 147 to 151 (AMGAR). Residues 152–206 (ASSRVYEEVELALLALGFAPGEVVRALDAVAPAMAGEEQTEAWLRAAIAWLSEQG) are domain III.

Belongs to the RuvA family. As to quaternary structure, homotetramer. Forms an RuvA(8)-RuvB(12)-Holliday junction (HJ) complex. HJ DNA is sandwiched between 2 RuvA tetramers; dsDNA enters through RuvA and exits via RuvB. An RuvB hexamer assembles on each DNA strand where it exits the tetramer. Each RuvB hexamer is contacted by two RuvA subunits (via domain III) on 2 adjacent RuvB subunits; this complex drives branch migration. In the full resolvosome a probable DNA-RuvA(4)-RuvB(12)-RuvC(2) complex forms which resolves the HJ.

It is found in the cytoplasm. The RuvA-RuvB-RuvC complex processes Holliday junction (HJ) DNA during genetic recombination and DNA repair, while the RuvA-RuvB complex plays an important role in the rescue of blocked DNA replication forks via replication fork reversal (RFR). RuvA specifically binds to HJ cruciform DNA, conferring on it an open structure. The RuvB hexamer acts as an ATP-dependent pump, pulling dsDNA into and through the RuvAB complex. HJ branch migration allows RuvC to scan DNA until it finds its consensus sequence, where it cleaves and resolves the cruciform DNA. The polypeptide is Holliday junction branch migration complex subunit RuvA (Gloeobacter violaceus (strain ATCC 29082 / PCC 7421)).